The chain runs to 231 residues: MNDVVLSCKNVSKKYTEFKTDIAILKDVNLEIKKGEKVAILGLSGSGKTTLLNVLGGLDKCSAGEVYLMGERFDNQSVNKRAKMRNKHLGFIYQLHHLLPEFTAIENVMIPLAITKKYTKKESIKLANEILKKVGLDHRADHKPAELSGGERQRVAIARALVTNPNCILADEPTGNLDSQRSESIFALMQQLSDDFGTSFVIVTHDEKLASRMNKIYRLVDGELELVINSN.

The ABC transporter domain occupies 6–230; the sequence is LSCKNVSKKY…DGELELVINS (225 aa). 42–49 provides a ligand contact to ATP; the sequence is GLSGSGKT.

This sequence belongs to the ABC transporter superfamily. Lipoprotein translocase (TC 3.A.1.125) family. The complex is composed of two ATP-binding proteins (LolD) and two transmembrane proteins (LolC and LolE).

Its subcellular location is the cell inner membrane. Part of the ABC transporter complex LolCDE involved in the translocation of mature outer membrane-directed lipoproteins, from the inner membrane to the periplasmic chaperone, LolA. Responsible for the formation of the LolA-lipoprotein complex in an ATP-dependent manner. The protein is Lipoprotein-releasing system ATP-binding protein LolD of Francisella tularensis subsp. tularensis (strain FSC 198).